Here is a 483-residue protein sequence, read N- to C-terminus: Homoserine O-acetyltransferase (483 aa).

Positions 47–346 constitute an AB hydrolase-1 domain; sequence NVILICHALT…HFGHDAFLLE (300 aa). Residue Ser-152 is the Nucleophile of the active site. Residue Arg-221 participates in substrate binding. Residues Asp-307 and His-340 contribute to the active site. Asp-341 provides a ligand contact to substrate. 2 CBS domains span residues 367–423 and 428–483; these read MSED…KISS and LSRD…KGTK.

It belongs to the AB hydrolase superfamily. MetX family. In terms of assembly, homodimer.

The protein resides in the cytoplasm. It catalyses the reaction L-homoserine + acetyl-CoA = O-acetyl-L-homoserine + CoA. It functions in the pathway amino-acid biosynthesis; L-methionine biosynthesis via de novo pathway; O-acetyl-L-homoserine from L-homoserine: step 1/1. In terms of biological role, transfers an acetyl group from acetyl-CoA to L-homoserine, forming acetyl-L-homoserine. The protein is Homoserine O-acetyltransferase of Methanohalophilus mahii (strain ATCC 35705 / DSM 5219 / SLP).